The sequence spans 451 residues: MRECISIHIGQAGIQVGNACWELYCLEHGIQPDGQMPGDKTVGGGDDAFNTFFSETGAGKHVPRAVFVDLEPTVIDEVRTGAYRQLFHPEQLISGKEDAANNFARGHYTIGKEIVDLCLDRIRKLSDNCTGLQGFLVFNAVGGGTGSGLGSLLLERLSVDYGKKSKLGFTVYPSPQVSTSVVEPYNSVLSTHSLLEHTDVSILLDNEAIYDICRRSLDIERPTYTNLNRLVSQVISSLTASLRFDGALNVDVNEFQTNLVPYPRIHFMLSSYAPVISAEKAYHEQLSVAEITNSAFEPSSMMAKCDPRHGKYMACCLMYRGDVVPKDVNAAVATIKTKRTIQFVDWCPTGFKCGINYQPPGVVPGGDLAKVQRAVCMISNSTSVVEVFSRIDHKFDLMYAKRAFVHWYVGEGMEEGEFSEAREDLAALEKDYEEVGAEFDDGEDGDEGDEY.

Gln-11 provides a ligand contact to GTP. N6-acetyllysine is present on Lys-40. GTP contacts are provided by Glu-71, Gly-144, Thr-145, Thr-179, Asn-206, and Asn-228. Position 71 (Glu-71) interacts with Mg(2+). Glu-254 is a catalytic residue.

Belongs to the tubulin family. In terms of assembly, dimer of alpha and beta chains. A typical microtubule is a hollow water-filled tube with an outer diameter of 25 nm and an inner diameter of 15 nM. Alpha-beta heterodimers associate head-to-tail to form protofilaments running lengthwise along the microtubule wall with the beta-tubulin subunit facing the microtubule plus end conferring a structural polarity. Microtubules usually have 13 protofilaments but different protofilament numbers can be found in some organisms and specialized cells. It depends on Mg(2+) as a cofactor. In terms of processing, undergoes a tyrosination/detyrosination cycle, the cyclic removal and re-addition of a C-terminal tyrosine residue by the enzymes tubulin tyrosine carboxypeptidase (TTCP) and tubulin tyrosine ligase (TTL), respectively. Acetylation of alpha chains at Lys-40 stabilizes microtubules and affects affinity and processivity of microtubule motors. This modification has a role in multiple cellular functions, ranging from cell motility, cell cycle progression or cell differentiation to intracellular trafficking and signaling.

The protein localises to the cytoplasm. It localises to the cytoskeleton. It carries out the reaction GTP + H2O = GDP + phosphate + H(+). In terms of biological role, tubulin is the major constituent of microtubules, a cylinder consisting of laterally associated linear protofilaments composed of alpha- and beta-tubulin heterodimers. Microtubules grow by the addition of GTP-tubulin dimers to the microtubule end, where a stabilizing cap forms. Below the cap, tubulin dimers are in GDP-bound state, owing to GTPase activity of alpha-tubulin. In Hordeum vulgare (Barley), this protein is Tubulin alpha-2 chain (TUBA2).